The primary structure comprises 1142 residues: Auxin response factor 5 (1142 aa).

Positions 148-250 form a DNA-binding region, TF-B3; that stretch reads FCKTLTASDT…QLLLGIRRAN (103 aa). The PB1 domain occupies 1009–1093; that stretch reads RTFTKVYKRG…RCIRILSPQE (85 aa). Positions 1114–1142 are disordered; that stretch reads SSSDGVNGWRPRCDQNPGNPSIGPYDQFE.

Belongs to the ARF family. As to quaternary structure, homodimers and heterodimers. In terms of tissue distribution, expressed in roots, culms, leaves and young panicles.

Its subcellular location is the nucleus. Functionally, auxin response factors (ARFs) are transcriptional factors that bind specifically to the DNA sequence 5'-TGTCTC-3' found in the auxin-responsive promoter elements (AuxREs). In Oryza sativa subsp. japonica (Rice), this protein is Auxin response factor 5 (ARF5).